The chain runs to 201 residues: Ubiquitin-conjugating enzyme E2 E2 (201 aa).

Basic and acidic residues predominate over residues 1-10 (MSTEAQRVDD). The interval 1–55 (MSTEAQRVDDSPSTSGGSSDGDQRESVQQEPEREQVQPKKKEGKISSKTAAKLST) is disordered. S2 is modified (N-acetylserine). Phosphoserine is present on residues S11, S15, S18, and S19. Residues 21 to 45 (GDQRESVQQEPEREQVQPKKKEGKI) are compositionally biased toward basic and acidic residues. A compositionally biased stretch (low complexity) spans 46 to 55 (SSKTAAKLST). The UBC core domain occupies 55–201 (TSAKRIQKEL…ARQWTKRYAT (147 aa)). C139 acts as the Glycyl thioester intermediate in catalysis.

This sequence belongs to the ubiquitin-conjugating enzyme family. Post-translationally, autoubiquitinated in vitro.

The catalysed reaction is S-ubiquitinyl-[E1 ubiquitin-activating enzyme]-L-cysteine + [E2 ubiquitin-conjugating enzyme]-L-cysteine = [E1 ubiquitin-activating enzyme]-L-cysteine + S-ubiquitinyl-[E2 ubiquitin-conjugating enzyme]-L-cysteine.. It functions in the pathway protein modification; protein ubiquitination. In terms of biological role, accepts ubiquitin from the E1 complex and catalyzes its covalent attachment to other proteins. In vitro catalyzes 'Lys-11'- and 'Lys-48'-, as well as 'Lys-63'-linked polyubiquitination. Catalyzes the ISGylation of influenza A virus NS1 protein. The protein is Ubiquitin-conjugating enzyme E2 E2 of Homo sapiens (Human).